Reading from the N-terminus, the 427-residue chain is Serine protease inhibitor 88Ea (427 aa).

Positions 1–18 (MHILSISLMAVLPAIALA) are cleaved as a signal peptide. N-linked (GlcNAc...) asparagine glycosylation is present at Asn224.

The protein belongs to the serpin family. In terms of tissue distribution, expressed in nurse cells and oocytes. Expressed in wings.

Its subcellular location is the secreted. In terms of biological role, serine protease inhibitor with activity toward trypsin. Negatively regulates the Toll signaling pathway and suppresses the expression of the antifungal peptide drosomycin. Its negative regulation of the Toll signaling pathway also results in the inhibition of the melanization immune response via the phenoloxidase (PPO1) cascade. Essential for unfolding and expansion of the wings after emergence from the pupal case. May regulate the Toll pathway by blocking the proteolysis of the Toll ligand spz. In Drosophila melanogaster (Fruit fly), this protein is Serine protease inhibitor 88Ea.